Reading from the N-terminus, the 258-residue chain is MGKTVVIKCGGSVLDELSPAFFASVRTMREQGMDVVIVHGGGPEIGQMLKKLAVPSEFVNGLRKTTKEVLAVVEMVLSGKVNKQLVAMLRQNGLPAVGVSGVDGGLLEAEPIDFAKLGYVGRVKTVRSRLLRTLLEAGYIPVVSPLGIDQNGQTYNINADTAAGAVAAAIGASQLAFVTNVPGILRDGALVAEATAETIERLIEDGVITGGMIPKVKAALSALSDALPEVMIVSGKTTFYQNGTWHGTTIRKEVGVYL.

Residues Gly-41–Gly-42, Arg-63, and Asn-156 contribute to the substrate site.

It belongs to the acetylglutamate kinase family. ArgB subfamily.

Its subcellular location is the cytoplasm. It catalyses the reaction N-acetyl-L-glutamate + ATP = N-acetyl-L-glutamyl 5-phosphate + ADP. The protein operates within amino-acid biosynthesis; L-arginine biosynthesis; N(2)-acetyl-L-ornithine from L-glutamate: step 2/4. Functionally, catalyzes the ATP-dependent phosphorylation of N-acetyl-L-glutamate. This is Acetylglutamate kinase from Geobacillus kaustophilus (strain HTA426).